Reading from the N-terminus, the 415-residue chain is Ankyrin repeat domain-containing protein 10 (415 aa).

4 ANK repeats span residues 20 to 49 (SLRF…RAHL), 56 to 85 (YGWT…SLNV), 90 to 119 (YAQT…NINK), and 123 to 152 (EGET…HTDL). The segment covering 303–325 (TGSNGVSNGQPLSSGQASVSANG) has biased composition (polar residues). Residues 303 to 330 (TGSNGVSNGQPLSSGQASVSANGTEEPE) are disordered.

The protein is Ankyrin repeat domain-containing protein 10 (Ankrd10) of Mus musculus (Mouse).